The following is a 282-amino-acid chain: Phosphatidylserine decarboxylase proenzyme (282 aa).

Residues Asp-88, His-144, and Ser-247 each act as charge relay system; for autoendoproteolytic cleavage activity in the active site. The active-site Schiff-base intermediate with substrate; via pyruvic acid; for decarboxylase activity is Ser-247. At Ser-247 the chain carries Pyruvic acid (Ser); by autocatalysis.

Belongs to the phosphatidylserine decarboxylase family. PSD-B subfamily. Prokaryotic type I sub-subfamily. In terms of assembly, heterodimer of a large membrane-associated beta subunit and a small pyruvoyl-containing alpha subunit. Requires pyruvate as cofactor. Is synthesized initially as an inactive proenzyme. Formation of the active enzyme involves a self-maturation process in which the active site pyruvoyl group is generated from an internal serine residue via an autocatalytic post-translational modification. Two non-identical subunits are generated from the proenzyme in this reaction, and the pyruvate is formed at the N-terminus of the alpha chain, which is derived from the carboxyl end of the proenzyme. The autoendoproteolytic cleavage occurs by a canonical serine protease mechanism, in which the side chain hydroxyl group of the serine supplies its oxygen atom to form the C-terminus of the beta chain, while the remainder of the serine residue undergoes an oxidative deamination to produce ammonia and the pyruvoyl prosthetic group on the alpha chain. During this reaction, the Ser that is part of the protease active site of the proenzyme becomes the pyruvoyl prosthetic group, which constitutes an essential element of the active site of the mature decarboxylase.

It is found in the cell membrane. The enzyme catalyses a 1,2-diacyl-sn-glycero-3-phospho-L-serine + H(+) = a 1,2-diacyl-sn-glycero-3-phosphoethanolamine + CO2. It participates in phospholipid metabolism; phosphatidylethanolamine biosynthesis; phosphatidylethanolamine from CDP-diacylglycerol: step 2/2. Catalyzes the formation of phosphatidylethanolamine (PtdEtn) from phosphatidylserine (PtdSer). The sequence is that of Phosphatidylserine decarboxylase proenzyme from Xanthomonas campestris pv. campestris (strain 8004).